A 1460-amino-acid chain; its full sequence is ABC transporter C family member 5 (1460 aa).

Disordered stretches follow at residues Met1–Glu23 and Gly37–Asn68. Low complexity predominate over residues Gly37–Ser55. Helical transmembrane passes span Phe196–Phe216, Leu238–Tyr258, Leu320–Trp340, Leu425–Tyr445, and Ile456–Gly476. In terms of domain architecture, ABC transmembrane type-1 1 spans Phe196 to Gln482. Residues Ile537 to Lys567 are disordered. Polar residues predominate over residues Ser551–Asn563. One can recognise an ABC transporter 1 domain in the interval Asn560–Leu783. Gly593–Ser600 contacts ATP. 4 consecutive transmembrane segments (helical) span residues Met842–Ile862, Ala922–Val942, Ile1014–Ile1034, and Trp1108–Ile1128. One can recognise an ABC transmembrane type-1 2 domain in the interval Phe853–Thr1166. The ABC transporter 2 domain maps to Ile1210–Asp1444. Gly1244–Ser1251 provides a ligand contact to ATP.

It belongs to the ABC transporter superfamily. ABCC family. Conjugate transporter (TC 3.A.1.208) subfamily.

It is found in the membrane. The protein is ABC transporter C family member 5 (abcC5) of Dictyostelium discoideum (Social amoeba).